A 426-amino-acid polypeptide reads, in one-letter code: Lactate racemase (426 aa).

72 to 75 (DHTR) is a Ni(II)-pyridinium-3,5-bisthiocarboxylate mononucleotide binding site. Active-site proton donor/acceptor residues include His108 and His174. Ni(II)-pyridinium-3,5-bisthiocarboxylate mononucleotide contacts are provided by Lys184 and His200. Residues Gln295 and Lys298 each contribute to the substrate site.

It belongs to the lactate racemase family. In terms of assembly, homodimer. It depends on Ni(II)-pyridinium-3,5-bisthiocarboxylate mononucleotide as a cofactor.

It carries out the reaction (S)-lactate = (R)-lactate. Activation of the apo-enzyme requires the three accessory proteins LarB, LarE and LarC, that are involved in the biosynthesis of the nickel-pincer cofactor of LarA. In terms of biological role, catalyzes the interconversion between the D- and L-isomers of lactate. This chain is Lactate racemase, found in Thermoanaerobacterium thermosaccharolyticum (strain ATCC 7956 / DSM 571 / NCIMB 9385 / NCA 3814 / NCTC 13789 / WDCM 00135 / 2032) (Clostridium thermosaccharolyticum).